Here is a 65-residue protein sequence, read N- to C-terminus: Large ribosomal subunit protein bL35 (65 aa).

The protein belongs to the bacterial ribosomal protein bL35 family.

The protein is Large ribosomal subunit protein bL35 of Edwardsiella ictaluri (strain 93-146).